Here is a 203-residue protein sequence, read N- to C-terminus: NAD(P)H dehydrogenase (quinone) (203 aa).

The region spanning 7–194 is the Flavodoxin-like domain; it reads VLVLYHSSYG…SLARKQGAHV (188 aa). FMN contacts are provided by residues 13–18 and 82–84; these read SSYGHI and TRF. An NAD(+)-binding site is contributed by tyrosine 15. Tryptophan 102 is a binding site for substrate. FMN contacts are provided by residues 117–122 and histidine 137; that span reads STGTGG.

Belongs to the WrbA family. FMN is required as a cofactor.

The enzyme catalyses a quinone + NADH + H(+) = a quinol + NAD(+). It catalyses the reaction a quinone + NADPH + H(+) = a quinol + NADP(+). The protein is NAD(P)H dehydrogenase (quinone) of Parvibaculum lavamentivorans (strain DS-1 / DSM 13023 / NCIMB 13966).